Here is a 133-residue protein sequence, read N- to C-terminus: Ribonuclease P protein component (133 aa).

It belongs to the RnpA family. As to quaternary structure, consists of a catalytic RNA component (M1 or rnpB) and a protein subunit.

The enzyme catalyses Endonucleolytic cleavage of RNA, removing 5'-extranucleotides from tRNA precursor.. RNaseP catalyzes the removal of the 5'-leader sequence from pre-tRNA to produce the mature 5'-terminus. It can also cleave other RNA substrates such as 4.5S RNA. The protein component plays an auxiliary but essential role in vivo by binding to the 5'-leader sequence and broadening the substrate specificity of the ribozyme. The polypeptide is Ribonuclease P protein component (Pseudomonas putida (strain ATCC 47054 / DSM 6125 / CFBP 8728 / NCIMB 11950 / KT2440)).